The primary structure comprises 301 residues: MRIAILSRNENLYSTMRLKQAGEERGHQIDVIDTLHCYMDITSNNPMIRYKGEELPQYDAVIPRIGASITFYGTAVVRQFEMMGTFCVNESVAISRSRDKLRSLQLLSRKGIGLPRTGFAHHPDNIQDVIKNVGGAPLVIKLLEGTQGIGVVLAETNKAAESVIEAFMGLKANIMVQEFIEEAKGADIRCFVVGNKVIAAMKRQAKEGEFRSNLHRGGSAQLVRLSKEERATAVNAAKVMGLNLCGVDILQSKNGPVVMEVNSSPGLEGIELATGKDVAGMIFDFIEKNAKPNSNRTRGKG.

Residues 104–287 (LQLLSRKGIG…VAGMIFDFIE (184 aa)) form the ATP-grasp domain. Residues K141, 178–179 (EF), D187, and 211–213 (RSN) contribute to the ATP site. Residues D248, E260, and N262 each contribute to the Mg(2+) site. Residues D248, E260, and N262 each contribute to the Mn(2+) site.

Belongs to the RimK family. It depends on Mg(2+) as a cofactor. Mn(2+) is required as a cofactor.

The polypeptide is Probable alpha-L-glutamate ligase (Vibrio parahaemolyticus serotype O3:K6 (strain RIMD 2210633)).